Consider the following 2442-residue polypeptide: Centrosome-associated protein CEP250 (2442 aa).

Coiled-coil stretches lie at residues Asn95 to Gln158, Ala244 to Met352, Leu395 to Pro1172, and Ser1243 to Leu2227. Composition is skewed to basic and acidic residues over residues Leu1273–Asp1289 and Leu1699–Gly1715. Disordered stretches follow at residues Leu1273–Gln1308, Leu1699–Glu1725, and Glu1820–Lys1839. Residues Glu1820–Gly1831 are compositionally biased toward low complexity. Ser2138 carries the post-translational modification Phosphoserine. Thr2218 carries the post-translational modification Phosphothreonine. Positions Glu2223–Gln2244 are disordered. Residues Ser2229, Ser2252, and Ser2322 each carry the phosphoserine modification. A coiled-coil region spans residues Gly2262–Arg2376. 2 disordered regions span residues Arg2307 to Asp2345 and Glu2416 to Arg2442. A compositionally biased stretch (polar residues) spans Ala2328–Gly2338. 2 positions are modified to phosphoserine; by NEK2: Ser2417 and Ser2421. A compositionally biased stretch (polar residues) spans Ser2433 to Arg2442.

As to quaternary structure, monomer and homodimer. Forms a complex in vitro with both NEK2 kinase and the PPP1CC catalytic subunit of protein phosphatase 1 (PP1). Interacts with CEP135. Interacts with CROCC/rootletin. Interacts with CNTLN. Interacts with NIN (via C-terminus). Interacts with CCDC102B (via N-terminus); the interaction results in recruitment of CCDC102B to the proximal ends of centrioles. Differentially phosphorylated during cell cycle. Phosphorylation may regulate association/dissociation from centrosome. During M phase of mitosis, C-terminal part is phosphorylated by NEK2, suggesting that it may trigger the dissociation from the mitotic centrosome. Dephosphorylated in vitro by the PP1 phosphatase. As to expression, ubiquitously and weakly expressed.

The protein resides in the cytoplasm. It localises to the perinuclear region. It is found in the cytoskeleton. The protein localises to the microtubule organizing center. Its subcellular location is the centrosome. The protein resides in the centriole. It localises to the cilium basal body. It is found in the cell projection. The protein localises to the cilium. Its subcellular location is the photoreceptor outer segment. The protein resides in the photoreceptor inner segment. In terms of biological role, plays an important role in centrosome cohesion during interphase. Recruits CCDC102B to the proximal ends of centrioles. Maintains centrosome cohesion by forming intercentriolar linkages. Accumulates at the proximal end of each centriole, forming supramolecular assemblies with viscous material properties that promote organelle cohesion. May be involved in ciliogenesis. This chain is Centrosome-associated protein CEP250 (CEP250), found in Homo sapiens (Human).